A 270-amino-acid chain; its full sequence is ParA family protein MPN_688 (270 aa).

Belongs to the ParA family.

The sequence is that of ParA family protein MPN_688 from Mycoplasma pneumoniae (strain ATCC 29342 / M129 / Subtype 1) (Mycoplasmoides pneumoniae).